Reading from the N-terminus, the 125-residue chain is uncharacterized protein (125 aa).

Residues 96–113 traverse the membrane as a helical segment; the sequence is LFMMSIVSSYVCYITVLL.

It localises to the membrane. This is an uncharacterized protein from Saccharomyces cerevisiae (strain ATCC 204508 / S288c) (Baker's yeast).